The following is a 238-amino-acid chain: tRNA (guanine-N(7)-)-methyltransferase (238 aa).

4 residues coordinate S-adenosyl-L-methionine: glutamate 68, glutamate 93, aspartate 120, and aspartate 143. Residue aspartate 143 is part of the active site. Residues lysine 147, aspartate 179, and 216-219 (TKFE) contribute to the substrate site.

It belongs to the class I-like SAM-binding methyltransferase superfamily. TrmB family.

It carries out the reaction guanosine(46) in tRNA + S-adenosyl-L-methionine = N(7)-methylguanosine(46) in tRNA + S-adenosyl-L-homocysteine. It functions in the pathway tRNA modification; N(7)-methylguanine-tRNA biosynthesis. Catalyzes the formation of N(7)-methylguanine at position 46 (m7G46) in tRNA. This is tRNA (guanine-N(7)-)-methyltransferase from Shewanella baltica (strain OS155 / ATCC BAA-1091).